The chain runs to 745 residues: Copper-exporting P-type ATPase B (745 aa).

Positions 1–76 are disordered; that stretch reads MNNGIDPENE…GMDHSHMDHE (76 aa). Topologically, residues 1–108 are cytoplasmic; the sequence is MNNGIDPENE…HMGNFKQKFW (108 aa). Residues 36–76 show a composition bias toward basic and acidic residues; sequence LQEHGKMENMDQHHTHGHMERHQQMDHGHMSGMDHSHMDHE. Repeat copies occupy residues 60 to 71, 73 to 84, and 86 to 97. The interval 60 to 97 is 3 X 12 AA approximate repeats; that stretch reads MDHGHMSGMDHSHMDHEDMSGMNHSHMGHENMSGMDHS. A helical transmembrane segment spans residues 109–128; sequence LSLILAIPIILFSPMMGMSF. Over 129 to 139 the chain is Extracellular; it reads PFQVTFPGSNW. Residues 140 to 160 form a helical membrane-spanning segment; it reads VVLVLATILFIYGGQPFLSGA. The Cytoplasmic segment spans residues 161 to 170; it reads KMELKQKSPA. A helical membrane pass occupies residues 171–191; the sequence is MMTLIAMGITVAYVYSVYSFI. Residues 192 to 200 are Extracellular-facing; the sequence is ANLINPHTH. A helical transmembrane segment spans residues 201-217; sequence VMDFFWELATLIVIMLL. The Cytoplasmic portion of the chain corresponds to 218 to 359; sequence GHWIEMNAVS…EFLSDKVAKW (142 aa). A helical membrane pass occupies residues 360–379; that stretch reads LFYVALVVGIIAFIAWLFLA. Over 380-388 the chain is Extracellular; sequence NLPDALERM. Residues 389–409 traverse the membrane as a helical segment; it reads VTVFIIACPHALGLAIPLVVA. Residues 410 to 703 are Cytoplasmic-facing; it reads RSTSIAAKNG…QNLWWGAGYN (294 aa). Asp-440 (4-aspartylphosphate intermediate) is an active-site residue. The Mg(2+) site is built by Asp-638 and Asp-642. Residues 704 to 721 traverse the membrane as a helical segment; it reads IIAIPLAAGILAPIGLIL. Residues 722-723 are Extracellular-facing; that stretch reads SP. Residues 724-744 form a helical membrane-spanning segment; the sequence is AVGAVLMSLSTVVVALNALTL. A topological domain (cytoplasmic) is located at residue Lys-745.

Belongs to the cation transport ATPase (P-type) (TC 3.A.3) family. Type IB subfamily. Monomer.

Its subcellular location is the cell membrane. It carries out the reaction Cu(+)(in) + ATP + H2O = Cu(+)(out) + ADP + phosphate + H(+). Its activity is regulated as follows. Inhibited by vanadate. Involved in copper export. Can also export silver. This is Copper-exporting P-type ATPase B (copB) from Enterococcus hirae (strain ATCC 9790 / DSM 20160 / JCM 8729 / LMG 6399 / NBRC 3181 / NCIMB 6459 / NCDO 1258 / NCTC 12367 / WDCM 00089 / R).